The chain runs to 65 residues: Non-structural protein 5a (65 aa).

The sequence is that of Non-structural protein 5a from Avian infectious bronchitis virus (strain Beaudette) (IBV).